Here is a 110-residue protein sequence, read N- to C-terminus: Thioredoxin Asp f 29 (110 aa).

Positions 1–110 constitute a Thioredoxin domain; sequence MSHNVEKITD…LEAAIKAHVA (110 aa). Active-site nucleophile residues include cysteine 34 and cysteine 37. Cysteine 34 and cysteine 37 form a disulfide bridge.

This sequence belongs to the thioredoxin family.

In terms of biological role, participates in various redox reactions through the reversible oxidation of its active center dithiol to a disulfide and catalyzes dithiol-disulfide exchange reactions. The polypeptide is Thioredoxin Asp f 29 (Aspergillus fumigatus (Neosartorya fumigata)).